Here is a 346-residue protein sequence, read N- to C-terminus: Tubulin-specific chaperone C (346 aa).

Residue methionine 1 is modified to N-acetylmethionine. Residues 1-26 (MESVSCSAAAVRTGDMESQRDLSLVP) are disordered. Serine 80 and serine 168 each carry phosphoserine. A disordered region spans residues 140-171 (KTRGKDAASSTKVDAAPGIPPAVESIQDSPLP). One can recognise a C-CAP/cofactor C-like domain in the interval 171–323 (PKKAEGDLGP…NWNDVDDFNW (153 aa)).

The protein belongs to the TBCC family. As to quaternary structure, supercomplex made of cofactors A to E. Cofactors A and D function by capturing and stabilizing tubulin in a quasi-native conformation. Cofactor E binds to the cofactor D-tubulin complex; interaction with cofactor C then causes the release of tubulin polypeptides that are committed to the native state. Expressed in the retina. Expressed in the rod and cone photoreceptors, extending from the inner segments (IS), through the outer nuclear layer (ONL) and into the synapses in the outer plexiform layer (OPL). Strongly expressed to the photoreceptor connecting cilium at the tips of the IS (at protein level).

The protein resides in the cytoplasm. Its function is as follows. Tubulin-folding protein; involved in the final step of the tubulin folding pathway. The chain is Tubulin-specific chaperone C (TBCC) from Homo sapiens (Human).